Here is a 417-residue protein sequence, read N- to C-terminus: 4-hydroxy-3-methylbut-2-en-1-yl diphosphate synthase (flavodoxin) (417 aa).

Residues C303, C306, C349, and E356 each coordinate [4Fe-4S] cluster.

It belongs to the IspG family. The cofactor is [4Fe-4S] cluster.

The enzyme catalyses (2E)-4-hydroxy-3-methylbut-2-enyl diphosphate + oxidized [flavodoxin] + H2O + 2 H(+) = 2-C-methyl-D-erythritol 2,4-cyclic diphosphate + reduced [flavodoxin]. It participates in isoprenoid biosynthesis; isopentenyl diphosphate biosynthesis via DXP pathway; isopentenyl diphosphate from 1-deoxy-D-xylulose 5-phosphate: step 5/6. Converts 2C-methyl-D-erythritol 2,4-cyclodiphosphate (ME-2,4cPP) into 1-hydroxy-2-methyl-2-(E)-butenyl 4-diphosphate. In Mesorhizobium japonicum (strain LMG 29417 / CECT 9101 / MAFF 303099) (Mesorhizobium loti (strain MAFF 303099)), this protein is 4-hydroxy-3-methylbut-2-en-1-yl diphosphate synthase (flavodoxin).